Here is a 245-residue protein sequence, read N- to C-terminus: Carboxymethylenebutenolidase homolog (245 aa).

Position 2 is an N-acetylalanine (alanine 2). Active-site residues include cysteine 132, aspartate 179, and histidine 212. The residue at position 223 (serine 223) is a Phosphoserine.

Belongs to the dienelactone hydrolase family.

It is found in the cytoplasm. The protein resides in the cytosol. Functionally, cysteine hydrolase. This Rattus norvegicus (Rat) protein is Carboxymethylenebutenolidase homolog (Cmbl).